The primary structure comprises 104 residues: Large ribosomal subunit protein bL21 (104 aa).

Belongs to the bacterial ribosomal protein bL21 family. As to quaternary structure, part of the 50S ribosomal subunit. Contacts protein L20.

Its function is as follows. This protein binds to 23S rRNA in the presence of protein L20. The sequence is that of Large ribosomal subunit protein bL21 from Lactococcus lactis subsp. lactis (strain IL1403) (Streptococcus lactis).